Reading from the N-terminus, the 424-residue chain is Protein ImpB (424 aa).

The UmuC domain occupies Phe-2–Gly-189.

The protein belongs to the DNA polymerase type-Y family.

Its function is as follows. Involved in UV protection and mutation. In Salmonella typhimurium, this protein is Protein ImpB (impB).